The chain runs to 479 residues: Ribulose bisphosphate carboxylase large chain (479 aa).

Residues 1–2 (MS) constitute a propeptide that is removed on maturation. The substrate site is built by asparagine 123 and threonine 173. Lysine 175 (proton acceptor) is an active-site residue. Lysine 177 contributes to the substrate binding site. Mg(2+)-binding residues include lysine 201, aspartate 203, and glutamate 204. The residue at position 201 (lysine 201) is an N6-carboxylysine. Phosphoserine is present on serine 208. The Proton acceptor role is filled by histidine 294. Substrate-binding residues include arginine 295 and histidine 327. A Phosphothreonine modification is found at threonine 330. Serine 379 contributes to the substrate binding site.

The protein belongs to the RuBisCO large chain family. Type I subfamily. In terms of assembly, heterohexadecamer of 8 large chains and 8 small chains; disulfide-linked. The disulfide link is formed within the large subunit homodimers. Mg(2+) serves as cofactor. Post-translationally, the disulfide bond which can form in the large chain dimeric partners within the hexadecamer appears to be associated with oxidative stress and protein turnover.

It is found in the plastid. Its subcellular location is the chloroplast. It carries out the reaction 2 (2R)-3-phosphoglycerate + 2 H(+) = D-ribulose 1,5-bisphosphate + CO2 + H2O. The catalysed reaction is D-ribulose 1,5-bisphosphate + O2 = 2-phosphoglycolate + (2R)-3-phosphoglycerate + 2 H(+). Functionally, ruBisCO catalyzes two reactions: the carboxylation of D-ribulose 1,5-bisphosphate, the primary event in carbon dioxide fixation, as well as the oxidative fragmentation of the pentose substrate in the photorespiration process. Both reactions occur simultaneously and in competition at the same active site. In Capsella bursa-pastoris (Shepherd's purse), this protein is Ribulose bisphosphate carboxylase large chain.